The sequence spans 240 residues: Enoyl-CoA delta isomerase 2, peroxisomal (240 aa).

The Microbody targeting signal motif lies at 238–240 (PKL).

The protein belongs to the enoyl-CoA hydratase/isomerase family.

The protein resides in the peroxisome. It carries out the reaction a (3Z)-enoyl-CoA = a 4-saturated (2E)-enoyl-CoA. The catalysed reaction is a (3E)-enoyl-CoA = a 4-saturated (2E)-enoyl-CoA. It participates in lipid metabolism; fatty acid beta-oxidation. Its function is as follows. Able to isomerize both 3-cis and 3-trans double bonds into the 2-trans form in a range of enoyl-CoA species. Essential for the beta oxidation of unsaturated fatty acids. Involved with IBR1 and IBR3 in the peroxisomal beta-oxidation of indole-3-butyric acid (IBA) to form indole-3-acetic acid (IAA), a biologically active auxin. This chain is Enoyl-CoA delta isomerase 2, peroxisomal, found in Arabidopsis thaliana (Mouse-ear cress).